The sequence spans 478 residues: Glycogen synthase (478 aa).

Residue K16 coordinates ADP-alpha-D-glucose.

This sequence belongs to the glycosyltransferase 1 family. Bacterial/plant glycogen synthase subfamily.

The catalysed reaction is [(1-&gt;4)-alpha-D-glucosyl](n) + ADP-alpha-D-glucose = [(1-&gt;4)-alpha-D-glucosyl](n+1) + ADP + H(+). The protein operates within glycan biosynthesis; glycogen biosynthesis. Its function is as follows. Synthesizes alpha-1,4-glucan chains using ADP-glucose. The protein is Glycogen synthase of Lachnoclostridium phytofermentans (strain ATCC 700394 / DSM 18823 / ISDg) (Clostridium phytofermentans).